A 602-amino-acid chain; its full sequence is Adenylosuccinate synthetase (602 aa).

GTP-binding positions include 74 to 80 (GDEGKGK) and 104 to 106 (GHT). The Proton acceptor role is filled by Asp-75. 2 residues coordinate Mg(2+): Asp-75 and Gly-104. Residues 75–78 (DEGK), 102–105 (NAGH), Thr-189, Lys-203, Gln-315, Thr-331, and Lys-459 each bind IMP. His-105 serves as the catalytic Proton donor. 455–461 (AVTKKPR) contacts substrate. Residues Arg-461 and 589-591 (GNG) contribute to the GTP site.

This sequence belongs to the adenylosuccinate synthetase family. In terms of assembly, homodimer. Requires Mg(2+) as cofactor.

The protein resides in the cytoplasm. It carries out the reaction IMP + L-aspartate + GTP = N(6)-(1,2-dicarboxyethyl)-AMP + GDP + phosphate + 2 H(+). It participates in purine metabolism; AMP biosynthesis via de novo pathway; AMP from IMP: step 1/2. Functionally, plays an important role in the salvage pathway for purine nucleotide biosynthesis. Catalyzes the first committed step in the biosynthesis of AMP from IMP. The protein is Adenylosuccinate synthetase of Trypanosoma brucei gambiense (strain MHOM/CI/86/DAL972).